Consider the following 274-residue polypeptide: Pyrroline-5-carboxylate reductase 3 (274 aa).

It belongs to the pyrroline-5-carboxylate reductase family. In terms of assembly, homodecamer; composed of 5 homodimers.

The protein localises to the cytoplasm. It carries out the reaction L-proline + NADP(+) = (S)-1-pyrroline-5-carboxylate + NADPH + 2 H(+). The enzyme catalyses L-proline + NAD(+) = (S)-1-pyrroline-5-carboxylate + NADH + 2 H(+). It functions in the pathway amino-acid biosynthesis; L-proline biosynthesis; L-proline from L-glutamate 5-semialdehyde: step 1/1. In terms of biological role, oxidoreductase that catalyzes the last step in proline biosynthesis, which corresponds to the reduction of pyrroline-5-carboxylate (P5C) to L-proline using NAD(P)H. Proline is synthesized from either glutamate or ornithine; both are converted to P5C, and then to proline via pyrroline-5-carboxylate reductases (PYCRs). PYCR3 is exclusively linked to the biosynthesis of proline from ornithine. The protein is Pyrroline-5-carboxylate reductase 3 of Xenopus laevis (African clawed frog).